A 358-amino-acid polypeptide reads, in one-letter code: Alanine racemase (358 aa).

Residue lysine 35 is the Proton acceptor; specific for D-alanine of the active site. Lysine 35 is modified (N6-(pyridoxal phosphate)lysine). Arginine 130 lines the substrate pocket. The active-site Proton acceptor; specific for L-alanine is tyrosine 255. Substrate is bound at residue methionine 303.

This sequence belongs to the alanine racemase family. The cofactor is pyridoxal 5'-phosphate.

It carries out the reaction L-alanine = D-alanine. It functions in the pathway amino-acid biosynthesis; D-alanine biosynthesis; D-alanine from L-alanine: step 1/1. In terms of biological role, catalyzes the interconversion of L-alanine and D-alanine. May also act on other amino acids. The chain is Alanine racemase (alr) from Shewanella sp. (strain ANA-3).